Consider the following 206-residue polypeptide: Small ribosomal subunit protein uS4 (206 aa).

The S4 RNA-binding domain occupies 96–156; that stretch reads CRLDNVVYRM…EKAKNQLRIV (61 aa).

This sequence belongs to the universal ribosomal protein uS4 family. As to quaternary structure, part of the 30S ribosomal subunit. Contacts protein S5. The interaction surface between S4 and S5 is involved in control of translational fidelity.

In terms of biological role, one of the primary rRNA binding proteins, it binds directly to 16S rRNA where it nucleates assembly of the body of the 30S subunit. With S5 and S12 plays an important role in translational accuracy. The sequence is that of Small ribosomal subunit protein uS4 from Pseudomonas fluorescens (strain Pf0-1).